The primary structure comprises 509 residues: Probable aspartic-type endopeptidase CTSD (509 aa).

A signal peptide spans 1–21 (MQFLWLCLLSAVTLQFTGTLA). The Peptidase A1 domain maps to 102–408 (YFSEVKVGSE…DFDKNRVGLA (307 aa)). D120 is a catalytic residue. N174 carries N-linked (GlcNAc...) asparagine glycosylation. D302 is an active-site residue. N-linked (GlcNAc...) asparagine glycosylation is present at N361. The segment at 451 to 489 (NKAPSGGSPGLPAESGSDSTTNGEATNGATSSPNSSSSV) is disordered. Positions 466-480 (GSDSTTNGEATNGAT) are enriched in polar residues. N-linked (GlcNAc...) asparagine glycosylation occurs at N484. S485 is lipidated: GPI-anchor amidated serine. The propeptide at 486 to 509 (SSSVLTPTWLTLAVFFAIGSSLWS) is removed in mature form.

It belongs to the peptidase A1 family.

It localises to the cell membrane. In terms of biological role, probable GPI-anchored aspartic-type endopeptidase which contributes to virulence. This Trichophyton verrucosum (strain HKI 0517) protein is Probable aspartic-type endopeptidase CTSD (CTSD).